The primary structure comprises 32 residues: Conotoxin pr6d (32 aa).

Pro5 bears the 4-hydroxyproline mark. 3 disulfide bridges follow: Cys7–Cys20, Cys14–Cys25, and Cys19–Cys30.

In terms of tissue distribution, expressed by the venom duct.

It localises to the secreted. The chain is Conotoxin pr6d from Conus parius (Cone snail).